A 197-amino-acid polypeptide reads, in one-letter code: uncharacterized protein (197 aa).

Helical transmembrane passes span 11 to 31 (IALIVVGIIALFLPWLTISAS), 85 to 105 (STFMMIFGIIPIILYIASIFV), 109 to 129 (AVVVGAGIAGITCASIFVVLF), and 174 to 194 (VGTGWYLTMIIGLALIAYPFI).

It is found in the cell membrane. This is an uncharacterized protein from Methanocaldococcus jannaschii (strain ATCC 43067 / DSM 2661 / JAL-1 / JCM 10045 / NBRC 100440) (Methanococcus jannaschii).